Reading from the N-terminus, the 335-residue chain is Phosphate acyltransferase (335 aa).

The protein belongs to the PlsX family. As to quaternary structure, homodimer. Probably interacts with PlsY.

Its subcellular location is the cytoplasm. The enzyme catalyses a fatty acyl-[ACP] + phosphate = an acyl phosphate + holo-[ACP]. It participates in lipid metabolism; phospholipid metabolism. Catalyzes the reversible formation of acyl-phosphate (acyl-PO(4)) from acyl-[acyl-carrier-protein] (acyl-ACP). This enzyme utilizes acyl-ACP as fatty acyl donor, but not acyl-CoA. This chain is Phosphate acyltransferase, found in Streptococcus pyogenes serotype M1.